A 450-amino-acid chain; its full sequence is NADP-specific glutamate dehydrogenase (450 aa).

Lys111 is a catalytic residue.

The protein belongs to the Glu/Leu/Phe/Val dehydrogenases family. Homohexamer.

It carries out the reaction L-glutamate + NADP(+) + H2O = 2-oxoglutarate + NH4(+) + NADPH + H(+). The chain is NADP-specific glutamate dehydrogenase (GDHA) from Laccaria bicolor (strain S238N-H82 / ATCC MYA-4686) (Bicoloured deceiver).